The chain runs to 81 residues: Insect-toxin Cn10 (81 aa).

A signal peptide spans 1-13; sequence ITACLVLIGTVCA. The region spanning 14-79 is the LCN-type CS-alpha/beta domain; sequence KEGYLVNKST…TYPIPGKTCR (66 aa). Disulfide bonds link Cys-25-Cys-78, Cys-29-Cys-54, Cys-38-Cys-59, and Cys-42-Cys-61. Lys-81 is a propeptide (removed by a carboxypeptidase).

Belongs to the long (4 C-C) scorpion toxin superfamily. Sodium channel inhibitor family. Beta subfamily. Expressed by the venom gland.

Its subcellular location is the secreted. Its function is as follows. Beta toxins bind voltage-independently at site-4 of sodium channels (Nav) and shift the voltage of activation toward more negative potentials thereby affecting sodium channel activation and promoting spontaneous and repetitive firing. Is toxic on insects and crustaceans, but not on mammals. This chain is Insect-toxin Cn10, found in Centruroides noxius (Mexican scorpion).